We begin with the raw amino-acid sequence, 104 residues long: Large ribosomal subunit protein bL21 (104 aa).

This sequence belongs to the bacterial ribosomal protein bL21 family. As to quaternary structure, part of the 50S ribosomal subunit. Contacts protein L20.

Functionally, this protein binds to 23S rRNA in the presence of protein L20. This chain is Large ribosomal subunit protein bL21, found in Helicobacter hepaticus (strain ATCC 51449 / 3B1).